The chain runs to 238 residues: uncharacterized protein (238 aa).

The segment at 1–20 (MPNLHSLPLGTRPENAIRNN) is disordered.

Belongs to the PEP2 family.

This is an uncharacterized protein from Emericella nidulans (strain FGSC A4 / ATCC 38163 / CBS 112.46 / NRRL 194 / M139) (Aspergillus nidulans).